The primary structure comprises 99 residues: Signal recognition particle 19 kDa protein (99 aa).

The protein belongs to the SRP19 family. Part of the signal recognition particle protein translocation system, which is composed of SRP and FtsY. Archaeal SRP consists of a 7S RNA molecule of 300 nucleotides and two protein subunits: SRP54 and SRP19.

The protein localises to the cytoplasm. Its function is as follows. Involved in targeting and insertion of nascent membrane proteins into the cytoplasmic membrane. Binds directly to 7S RNA and mediates binding of the 54 kDa subunit of the SRP. The polypeptide is Signal recognition particle 19 kDa protein (Pyrococcus abyssi (strain GE5 / Orsay)).